Consider the following 804-residue polypeptide: Phenylalanine--tRNA ligase beta subunit (804 aa).

The tRNA-binding domain occupies 38–148 (RAAFRAFTIA…ENAPVGTSFA (111 aa)). Positions 401-476 (HTARVIDFPV…RIHGINRIDP (76 aa)) constitute a B5 domain. Residues D454, D460, E463, and E464 each coordinate Mg(2+). One can recognise an FDX-ACB domain in the interval 710–803 (SLFQSLKRDY…VAKQTGGVLR (94 aa)).

This sequence belongs to the phenylalanyl-tRNA synthetase beta subunit family. Type 1 subfamily. In terms of assembly, tetramer of two alpha and two beta subunits. Mg(2+) serves as cofactor.

It is found in the cytoplasm. It catalyses the reaction tRNA(Phe) + L-phenylalanine + ATP = L-phenylalanyl-tRNA(Phe) + AMP + diphosphate + H(+). The sequence is that of Phenylalanine--tRNA ligase beta subunit from Brucella melitensis biotype 1 (strain ATCC 23456 / CCUG 17765 / NCTC 10094 / 16M).